We begin with the raw amino-acid sequence, 506 residues long: 2-isopropylmalate synthase (506 aa).

The 262-residue stretch at 6 to 267 (IIVFDTTLRD…YTDIVTKEIY (262 aa)) folds into the Pyruvate carboxyltransferase domain. The Mn(2+) site is built by D15, H201, H203, and N237. The interval 391–506 (SIQTLSTSSC…LNSYLSMKNR (116 aa)) is regulatory domain.

This sequence belongs to the alpha-IPM synthase/homocitrate synthase family. LeuA type 1 subfamily. In terms of assembly, homodimer. Requires Mn(2+) as cofactor.

Its subcellular location is the cytoplasm. It catalyses the reaction 3-methyl-2-oxobutanoate + acetyl-CoA + H2O = (2S)-2-isopropylmalate + CoA + H(+). It participates in amino-acid biosynthesis; L-leucine biosynthesis; L-leucine from 3-methyl-2-oxobutanoate: step 1/4. Its function is as follows. Catalyzes the condensation of the acetyl group of acetyl-CoA with 3-methyl-2-oxobutanoate (2-ketoisovalerate) to form 3-carboxy-3-hydroxy-4-methylpentanoate (2-isopropylmalate). The protein is 2-isopropylmalate synthase of Campylobacter fetus subsp. fetus (strain 82-40).